Reading from the N-terminus, the 228-residue chain is Urease accessory protein UreF (228 aa).

The protein belongs to the UreF family. UreD, UreF and UreG form a complex that acts as a GTP-hydrolysis-dependent molecular chaperone, activating the urease apoprotein by helping to assemble the nickel containing metallocenter of UreC. The UreE protein probably delivers the nickel.

It localises to the cytoplasm. Its function is as follows. Required for maturation of urease via the functional incorporation of the urease nickel metallocenter. This chain is Urease accessory protein UreF, found in Prochlorococcus marinus (strain MIT 9215).